The primary structure comprises 55 residues: Large ribosomal subunit protein bL33 (55 aa).

It belongs to the bacterial ribosomal protein bL33 family.

The chain is Large ribosomal subunit protein bL33 from Bifidobacterium longum (strain DJO10A).